We begin with the raw amino-acid sequence, 575 residues long: Transmembrane protein 108 (575 aa).

The helical transmembrane segment at 9–29 threads the bilayer; that stretch reads YCQLLSFLLILALTEALAFAI. The interaction with SH3GL2 stretch occupies residues 31–169; sequence EPSPRESLQV…TTTRRPPRPP (139 aa). The tract at residues 65 to 398 is disordered; the sequence is MLTPNPDGPP…PSRVSESTIS (334 aa). The segment covering 74–87 has biased composition (low complexity); that stretch reads PSQAAAPMATPTPR. The segment covering 95-115 has biased composition (polar residues); it reads HTISTIAATVTAPHSESSLST. Low complexity predominate over residues 146–160; that stretch reads PPGATSRPTTAPPRT. The interaction with DST (isoform 1) stretch occupies residues 173–407; it reads RKGAGNSSRP…SGAKEETVAT (235 aa). The segment covering 244-271 has biased composition (polar residues); sequence YSSSPQPQTVAATTVPSNTSWAPTTTSL. A compositionally biased stretch (low complexity) spans 290–318; the sequence is TFTSQGGTPDATAASGAPVSPQAAPVPSQ. The segment covering 329 to 352 has biased composition (polar residues); the sequence is PSHSDSWLTVTPGTSRPLSTSSGV. Residues 353–366 are compositionally biased toward low complexity; the sequence is FTAATGPTPAAFDT. Residues 367 to 398 are compositionally biased toward polar residues; it reads SVSAPSQGIPQGASTTPQAPTHPSRVSESTIS. Residues 469–489 traverse the membrane as a helical segment; sequence IAWVILAISVPISSCSVLLTV. The segment at 490–575 is interaction with CYFIP2; the sequence is CCMKRKKKTA…FVGNDQVSEI (86 aa).

As to quaternary structure, interacts with DST (isoform 1). Interacts with SH3GL2. Interacts (via N-terminus) with CYFIP1 and CYFIP2; the interactions associate TMEM108 with the WAVE1 complex. Post-translationally, glycosylated.

It is found in the membrane. Its subcellular location is the postsynaptic density. The protein resides in the endosome membrane. It localises to the cell projection. The protein localises to the axon. It is found in the dendrite. Its subcellular location is the early endosome. In terms of biological role, transmembrane protein required for proper cognitive functions. Involved in the development of dentate gyrus (DG) neuron circuitry, is necessary for AMPA receptors surface expression and proper excitatory postsynaptic currents of DG granule neurons. Regulates the organization and stability of the microtubule network of sensory neurons to allow axonal transport. Through the interaction with DST, mediates the docking of the dynein/dynactin motor complex to vesicle cargos for retrograde axonal transport. In hippocampal neurons, required for BDNF-dependent dendrite outgrowth. Cooperates with SH3GL2 and recruits the WAVE1 complex to facilitate actin-dependent BDNF:NTRK2 early endocytic trafficking and mediate signaling from early endosomes. This chain is Transmembrane protein 108, found in Homo sapiens (Human).